The following is a 646-amino-acid chain: Threonine--tRNA ligase (646 aa).

The 63-residue stretch at 1-63 folds into the TGS domain; the sequence is MAQISLTFPD…ETDAKIAIHT (63 aa). The catalytic stretch occupies residues 247–544; that stretch reads DHRKLGREME…LIENYAGKLP (298 aa). Positions 344, 395, and 521 each coordinate Zn(2+).

The protein belongs to the class-II aminoacyl-tRNA synthetase family. As to quaternary structure, homodimer. Requires Zn(2+) as cofactor.

It is found in the cytoplasm. The catalysed reaction is tRNA(Thr) + L-threonine + ATP = L-threonyl-tRNA(Thr) + AMP + diphosphate + H(+). Its function is as follows. Catalyzes the attachment of threonine to tRNA(Thr) in a two-step reaction: L-threonine is first activated by ATP to form Thr-AMP and then transferred to the acceptor end of tRNA(Thr). Also edits incorrectly charged L-seryl-tRNA(Thr). The protein is Threonine--tRNA ligase of Cereibacter sphaeroides (strain ATCC 17029 / ATH 2.4.9) (Rhodobacter sphaeroides).